Reading from the N-terminus, the 79-residue chain is uncharacterized protein (79 aa).

An N-terminal signal peptide occupies residues 1 to 24; that stretch reads MNKFLNLIGLAFVLVLCAFSCSNA. A LysM domain is found at 32–78; it reads SWHVAQKGYTCYDMATSCKVTLDQFMRTNKLDNNACKLVQIGRKYCC.

The protein resides in the secreted. This is an uncharacterized protein from Dictyostelium discoideum (Social amoeba).